The sequence spans 384 residues: Dual-specificity RNA methyltransferase RlmN (384 aa).

Glu105 (proton acceptor) is an active-site residue. In terms of domain architecture, Radical SAM core spans 111 to 350 (EDDRATLCVS…TIVRKTRGDD (240 aa)). An intrachain disulfide couples Cys118 to Cys355. The [4Fe-4S] cluster site is built by Cys125, Cys129, and Cys132. Residues 179 to 180 (GE), Ser211, 233 to 235 (SLH), and Asn312 each bind S-adenosyl-L-methionine. Cys355 functions as the S-methylcysteine intermediate in the catalytic mechanism.

The protein belongs to the radical SAM superfamily. RlmN family. It depends on [4Fe-4S] cluster as a cofactor.

Its subcellular location is the cytoplasm. It catalyses the reaction adenosine(2503) in 23S rRNA + 2 reduced [2Fe-2S]-[ferredoxin] + 2 S-adenosyl-L-methionine = 2-methyladenosine(2503) in 23S rRNA + 5'-deoxyadenosine + L-methionine + 2 oxidized [2Fe-2S]-[ferredoxin] + S-adenosyl-L-homocysteine. It carries out the reaction adenosine(37) in tRNA + 2 reduced [2Fe-2S]-[ferredoxin] + 2 S-adenosyl-L-methionine = 2-methyladenosine(37) in tRNA + 5'-deoxyadenosine + L-methionine + 2 oxidized [2Fe-2S]-[ferredoxin] + S-adenosyl-L-homocysteine. In terms of biological role, specifically methylates position 2 of adenine 2503 in 23S rRNA and position 2 of adenine 37 in tRNAs. m2A2503 modification seems to play a crucial role in the proofreading step occurring at the peptidyl transferase center and thus would serve to optimize ribosomal fidelity. This chain is Dual-specificity RNA methyltransferase RlmN, found in Escherichia coli O17:K52:H18 (strain UMN026 / ExPEC).